Here is an 83-residue protein sequence, read N- to C-terminus: Scyreptin (83 aa).

Its function is as follows. cationic antimicrobial peptide that exhibits a potent and broad-spectrum antimicrobial activity against both bacteria and fungi, as well as against the multidrug-resistant bacteria P.aeruginosa. Exhibits rapid bactericidal kinetic. Acts by destroying the integrity of bacterial membranes, leading to bacterial death. Also exhibits potent anti-biofilm activity against P.aeruginosa. Shows high thermal stability and ion tolerance, as it maintains antibacterial activity even when heated to 100 degrees Celsius for 30 minutes and in presence of high levels of NaCl, CaCl(2) and MgCl(2). Does not show cytotoxicity and hemolytic activity. In a mouse model of burn infection, exhibits a remarkably reduction in the bacterial load caused by multidrug-resistant P.aeruginosa at the site of infection, and promotes wound healing. This Scylla paramamosain (Mud crab) protein is Scyreptin.